The sequence spans 551 residues: Cytochrome c oxidase subunit 1 (551 aa).

The chain crosses the membrane as a helical span at residues 34–54 (TLYLYSGVWGGLFGASLSLMI). Gly-62 lines the Ca(2+) pocket. His-79 is a binding site for Fe(II)-heme a. 6 helical membrane-spanning segments follow: residues 81–101 (LMMIFFAVMPILIEAFGNWLI), 126–146 (ALYLLMLSFSTDKGVGAGWTI), 163–183 (VLIVSLHLAGLSSLVGAINFA), 209–229 (TAVLLIISIPVLGGGITMILF), 252–272 (LFWFFGHPEVYILILPAFGVM), and 285–305 (VFGLIGMVYAMIGIGGLGCMV). His-258 lines the Cu cation pocket. Positions 258–262 (HPEVY) form a cross-link, 1'-histidyl-3'-tyrosine (His-Tyr). Tyr-262 is a binding site for O2. His-308 and His-309 together coordinate Cu cation. 2 helical membrane passes run 326 to 346 (ATMVIAVPTGVKVFSWLATMA) and 356 to 376 (AYWSTGFLFLFTVGGLTGVLL). Positions 386 and 387 each coordinate Mg(2+). 3 helical membrane passes run 391 to 411 (VVAHFHYVLSMGAVFGVFCGL), 432 to 452 (FMAMFFGVNTTFFPQHFLGLS), and 475 to 495 (GSAVSFGSLMYFKFLLWEALV). His-394 lines the heme a3 pocket. Fe(II)-heme a is bound at residue His-396.

This sequence belongs to the heme-copper respiratory oxidase family. In terms of assembly, component of the cytochrome c oxidase (complex IV, CIV), a multisubunit enzyme composed of a catalytic core of 3 subunits and several supernumerary subunits. The complex exists as a monomer or a dimer and forms supercomplexes (SCs) in the inner mitochondrial membrane with ubiquinol-cytochrome c oxidoreductase (cytochrome b-c1 complex, complex III, CIII). The cofactor is heme. It depends on Cu cation as a cofactor.

The protein resides in the mitochondrion inner membrane. It carries out the reaction 4 Fe(II)-[cytochrome c] + O2 + 8 H(+)(in) = 4 Fe(III)-[cytochrome c] + 2 H2O + 4 H(+)(out). Its pathway is energy metabolism; oxidative phosphorylation. Component of the cytochrome c oxidase, the last enzyme in the mitochondrial electron transport chain which drives oxidative phosphorylation. The respiratory chain contains 3 multisubunit complexes succinate dehydrogenase (complex II, CII), ubiquinol-cytochrome c oxidoreductase (cytochrome b-c1 complex, complex III, CIII) and cytochrome c oxidase (complex IV, CIV), that cooperate to transfer electrons derived from NADH and succinate to molecular oxygen, creating an electrochemical gradient over the inner membrane that drives transmembrane transport and the ATP synthase. Cytochrome c oxidase is the component of the respiratory chain that catalyzes the reduction of oxygen to water. Electrons originating from reduced cytochrome c in the intermembrane space (IMS) are transferred via the dinuclear copper A center (CU(A)) of subunit 2 and heme A of subunit 1 to the active site in subunit 1, a binuclear center (BNC) formed by heme A3 and copper B (CU(B)). The BNC reduces molecular oxygen to 2 water molecules using 4 electrons from cytochrome c in the IMS and 4 protons from the mitochondrial matrix. The chain is Cytochrome c oxidase subunit 1 (COI) from Mytilus edulis (Blue mussel).